A 239-amino-acid chain; its full sequence is Sugar fermentation stimulation protein homolog (239 aa).

This sequence belongs to the SfsA family.

This chain is Sugar fermentation stimulation protein homolog, found in Synechococcus sp. (strain JA-2-3B'a(2-13)) (Cyanobacteria bacterium Yellowstone B-Prime).